The primary structure comprises 231 residues: Small ribosomal subunit protein uS5 (231 aa).

A disordered region spans residues 1 to 63 (MADLENKTVK…KSVDRANKVK (63 aa)). Basic and acidic residues predominate over residues 29-60 (KRTESGAKKQIWEKRSAHDSKDMPKKSVDRAN). In terms of domain architecture, S5 DRBM spans 75–138 (FSEKVVNISR…KDARNHLISV (64 aa)).

This sequence belongs to the universal ribosomal protein uS5 family. In terms of assembly, part of the 30S ribosomal subunit. Contacts proteins S4 and S8.

Functionally, with S4 and S12 plays an important role in translational accuracy. Its function is as follows. Located at the back of the 30S subunit body where it stabilizes the conformation of the head with respect to the body. This is Small ribosomal subunit protein uS5 from Mycoplasmopsis agalactiae (strain NCTC 10123 / CIP 59.7 / PG2) (Mycoplasma agalactiae).